The primary structure comprises 212 residues: uncharacterized protein (212 aa).

2 helical membrane passes run 54 to 74 (LCFA…GYAG) and 79 to 99 (WIIC…ALLL).

Its subcellular location is the cell membrane. This is an uncharacterized protein from Chlamydia pneumoniae (Chlamydophila pneumoniae).